Here is an 88-residue protein sequence, read N- to C-terminus: Adenylosuccinate lyase (88 aa).

N(6)-(1,2-dicarboxyethyl)-AMP is bound by residues 4–5 and 67–69; these read RY and KHD.

This sequence belongs to the lyase 1 family. Adenylosuccinate lyase subfamily. As to quaternary structure, homotetramer and homodimer. Residues from neighboring subunits contribute catalytic and substrate-binding residues to each active site.

It catalyses the reaction N(6)-(1,2-dicarboxyethyl)-AMP = fumarate + AMP. It carries out the reaction (2S)-2-[5-amino-1-(5-phospho-beta-D-ribosyl)imidazole-4-carboxamido]succinate = 5-amino-1-(5-phospho-beta-D-ribosyl)imidazole-4-carboxamide + fumarate. It functions in the pathway purine metabolism; AMP biosynthesis via de novo pathway; AMP from IMP: step 2/2. It participates in purine metabolism; IMP biosynthesis via de novo pathway; 5-amino-1-(5-phospho-D-ribosyl)imidazole-4-carboxamide from 5-amino-1-(5-phospho-D-ribosyl)imidazole-4-carboxylate: step 2/2. Functionally, catalyzes two reactions in de novo purine nucleotide biosynthesis. Catalyzes the breakdown of 5-aminoimidazole- (N-succinylocarboxamide) ribotide (SAICAR or 2-[5-amino-1-(5-phospho-beta-D-ribosyl)imidazole-4-carboxamido]succinate) to 5-aminoimidazole-4-carboxamide ribotide (AICAR or 5-amino-1-(5-phospho-beta-D-ribosyl)imidazole-4-carboxamide) and fumarate, and of adenylosuccinate (ADS or N(6)-(1,2-dicarboxyethyl)-AMP) to adenosine monophosphate (AMP) and fumarate. This Spiroplasma citri protein is Adenylosuccinate lyase (purB).